Here is a 607-residue protein sequence, read N- to C-terminus: WD repeat-containing protein 1-A (607 aa).

WD repeat units lie at residues 4 to 45, 48 to 87, 93 to 135, 138 to 176, 180 to 218, 224 to 263, 270 to 306, 311 to 351, 358 to 408, 432 to 474, 480 to 518, 523 to 561, and 566 to 604; these read ELKK…IRNI, PAIA…IWDT, LLKY…LWDT, SVGE…FLEG, KFKF…LYDG, VCSL…IWDV, TTFN…YLDK, RPLR…YWDA, TFTG…KMDV, LKDK…LYSI, KDEG…VFSV, SEKN…VWTL, and TRIK…QWTV.

The protein belongs to the WD repeat AIP1 family.

It is found in the cell membrane. The protein localises to the cytoplasm. It localises to the cytoskeleton. The protein resides in the nucleus. Its function is as follows. Induces disassembly of actin filaments in conjunction with ADF/cofilin family proteins. Doesn't sever actin filaments alone, but caps the barbed ends of filaments severed by cofilin, which blocks annealing and depolymerization and allows more extensive severing by cofilin. This chain is WD repeat-containing protein 1-A (wdr1-a), found in Xenopus laevis (African clawed frog).